Consider the following 258-residue polypeptide: Archaerhodopsin-3 (258 aa).

Positions 1–6 (MDPIAL) are excised as a propeptide. Gln7 carries the post-translational modification Pyrrolidone carboxylic acid. The Extracellular portion of the chain corresponds to 7–18 (QAGYDLLGDGRP). A helical membrane pass occupies residues 19–40 (ETLWLGIGTLLMLIGTFYFLVR). Over 41–49 (GWGVTDKDA) the chain is Cytoplasmic. A helical transmembrane segment spans residues 50–71 (REYYAVTILVPGIASAAYLSMF). The Extracellular segment spans residues 72–89 (FGIGLTEVTVGGEMLDIY). Residues 90-111 (YARYADWLFTTPLLLLDLALLA) form a helical membrane-spanning segment. Over 112–114 (KVD) the chain is Cytoplasmic. Residues 115–137 (RVTIGTLVGVDALMIVTGLIGAL) traverse the membrane as a helical segment. The Extracellular portion of the chain corresponds to 138–141 (SHTA). Residues 142 to 170 (IARYSWWLFSTICMIVVLYFLATSLRSAA) form a helical membrane-spanning segment. Topologically, residues 171–173 (KER) are cytoplasmic. Residues 174–202 (GPEVASTFNTLTALVLVLWTAYPILWIIG) form a helical membrane-spanning segment. Residues 203 to 210 (TEGAGVVG) are Extracellular-facing. The helical transmembrane segment at 211–243 (LGIETLLFMVLDVTAKVGFGFILLRSRAILGDT) threads the bilayer. Residue Lys226 is modified to N6-(retinylidene)lysine. Topologically, residues 244–258 (EAPEPSAGADVSAAD) are cytoplasmic.

It belongs to the archaeal/bacterial/fungal opsin family.

Its subcellular location is the cell membrane. Its function is as follows. Light-driven proton pump. The polypeptide is Archaerhodopsin-3 (aop3) (Halorubrum sodomense).